The following is a 504-amino-acid chain: L-amino-acid oxidase (504 aa).

An N-terminal signal peptide occupies residues 1–18; it reads MNVFFMFSLLFLAALGSC. A disulfide bridge links Cys-28 with Cys-191. Residues 61-62, 81-82, Arg-89, and 105-108 each bind FAD; these read MS, EA, and GPMR. Residue Arg-108 coordinates substrate. Residue Asn-190 is glycosylated (N-linked (GlcNAc...) asparagine). His-241 contacts substrate. Val-279 is a binding site for FAD. Cys-349 and Cys-430 form a disulfide bridge. The N-linked (GlcNAc...) asparagine glycan is linked to Asn-379. Tyr-390 serves as a coordination point for substrate. Residues Glu-475 and 482-487 each bind FAD; that span reads GWIDST. 482 to 483 contacts substrate; that stretch reads GW.

The protein belongs to the flavin monoamine oxidase family. FIG1 subfamily. In terms of assembly, homodimer; non-covalently linked. The cofactor is FAD. As to expression, expressed by the venom gland.

The protein localises to the secreted. It catalyses the reaction an L-alpha-amino acid + O2 + H2O = a 2-oxocarboxylate + H2O2 + NH4(+). The enzyme catalyses L-leucine + O2 + H2O = 4-methyl-2-oxopentanoate + H2O2 + NH4(+). Its function is as follows. Catalyzes an oxidative deamination of predominantly hydrophobic and aromatic L-amino acids, thus producing hydrogen peroxide that may contribute to the diverse toxic effects of this enzyme. Shows activity on L-Leu. Exhibits diverse biological activities, such as apoptosis, and inhibition of agonist- and shear stress-induced platelet aggregation (SIPA). Effects of snake L-amino oxidases on platelets are controversial, since they either induce aggregation or inhibit agonist-induced aggregation. These different effects are probably due to different experimental conditions. This protein may also induce hemorrhage, hemolysis, edema, antibacterial and antiparasitic activities. In Gloydius blomhoffii (Mamushi), this protein is L-amino-acid oxidase.